The sequence spans 116 residues: MAGVLKKTTGLVGLAVCNTPHERLRILYTKILDVLEEIPKNAAYRKYTEQITNEKLAMVKAEPDVKKLEDQLQGGQLEEVILQAEHELNLARKMKEWKLWEPLVEEPPADQWKWPI.

Ala-2 carries the post-translational modification N-acetylalanine. Residues Lys-30, Lys-46, and Lys-60 each carry the N6-acetyllysine modification. An N6-acetyllysine; alternate modification is found at Lys-98. Lys-98 carries the post-translational modification N6-succinyllysine; alternate.

The protein belongs to the complex I NDUFA5 subunit family. In terms of assembly, complex I is composed of 45 different subunits.

Its subcellular location is the mitochondrion inner membrane. In terms of biological role, accessory subunit of the mitochondrial membrane respiratory chain NADH dehydrogenase (Complex I), that is believed not to be involved in catalysis. Complex I functions in the transfer of electrons from NADH to the respiratory chain. The immediate electron acceptor for the enzyme is believed to be ubiquinone. The sequence is that of NADH dehydrogenase [ubiquinone] 1 alpha subcomplex subunit 5 (NDUFA5) from Pongo pygmaeus (Bornean orangutan).